The following is a 167-amino-acid chain: Phospholipase A2 heteromtoxin (167 aa).

Positions 38, 40, and 42 each coordinate Ca(2+). 5 disulfide bridges follow: C39-C61, C60-C99, C67-C92, C90-C127, and C132-C144. The active site involves H64. A Ca(2+)-binding site is contributed by D65. A propeptide spanning residues 136–140 (GRSAR) is cleaved from the precursor.

Belongs to the phospholipase A2 family. Group III subfamily. Heterodimer composed of a large and a small subunits; disulfide-linked. The cofactor is Ca(2+). As to expression, expressed by the venom gland.

The protein resides in the secreted. It catalyses the reaction a 1,2-diacyl-sn-glycero-3-phosphocholine + H2O = a 1-acyl-sn-glycero-3-phosphocholine + a fatty acid + H(+). In terms of biological role, phospholipase toxin, which catalyzes the calcium-dependent hydrolysis of the 2-acyl groups in 3-sn-phosphoglycerides. Inhibits both skeletal (RYR1) and cardiac (RYR2) ryanodine receptors (calcium release channels). Probably blocks ryanodine receptors by generating a lipid product. In Heterometrus laoticus (Thai giant scorpion), this protein is Phospholipase A2 heteromtoxin.